The chain runs to 601 residues: Transcription factor ATEG_07666 (601 aa).

A DNA-binding region (zn(2)-C6 fungal-type) is located at residues 17–44 (CEECRRRKARCDRVRPKCGFCTENGMQC).

The protein localises to the nucleus. Its function is as follows. Specific transcriptional regulator for the azasperpyranone A biosynthesis cluster B. The protein is Transcription factor ATEG_07666 of Aspergillus terreus (strain NIH 2624 / FGSC A1156).